The primary structure comprises 122 residues: Large ribosomal subunit protein uL14 (122 aa).

It belongs to the universal ribosomal protein uL14 family. In terms of assembly, part of the 50S ribosomal subunit. Forms a cluster with proteins L3 and L19. In the 70S ribosome, L14 and L19 interact and together make contacts with the 16S rRNA in bridges B5 and B8.

Functionally, binds to 23S rRNA. Forms part of two intersubunit bridges in the 70S ribosome. The chain is Large ribosomal subunit protein uL14 from Mycobacterium ulcerans (strain Agy99).